The following is a 419-amino-acid chain: eIF5-mimic protein 1 (419 aa).

A disordered region spans residues 1 to 22; that stretch reads MNKHQKPVLTGQRFKTRKRDEK. N6-acetyllysine is present on Lys117. The W2 domain maps to 248-415; the sequence is VQQSLGTRKE…QNAEEESESE (168 aa). A phosphoserine mark is found at Ser412, Ser414, and Ser419.

The protein belongs to the BZW family. Interacts with EIF3E, EIF2S2 and EIF3C. As to expression, expressed at high levels in heart, and at lower levels in skeletal muscle, spleen and lung. Expressed at low levels in brain regions where nascent and immature neurons are present.

It localises to the cytoplasm. Translation initiation regulator which represses non-AUG initiated translation and repeat-associated non-AUG (RAN) initiated translation by acting as a competitive inhibitor of eukaryotic translation initiation factor 5 (EIF5) function. Increases the accuracy of translation initiation by impeding EIF5-dependent translation from non-AUG codons by competing with it for interaction with EIF2S2 within the 43S pre-initiation complex (PIC) in an EIF3C-binding dependent manner. The polypeptide is eIF5-mimic protein 1 (Bzw2) (Rattus norvegicus (Rat)).